The sequence spans 601 residues: NAD-dependent malic enzyme 59 kDa isoform, mitochondrial (601 aa).

The transit peptide at 1–18 (MWRVARSAASTFRRTRRL) directs the protein to the mitochondrion. Residue Y129 is the Proton donor of the active site. R182 is an NAD(+) binding site. K200 (proton acceptor) is an active-site residue. A divalent metal cation contacts are provided by E271, D272, and D295. Residues D295 and N444 each coordinate NAD(+).

Belongs to the malic enzymes family. As to quaternary structure, heterodimer of two related subunits. Requires Mg(2+) as cofactor. It depends on Mn(2+) as a cofactor.

It is found in the mitochondrion matrix. The catalysed reaction is (S)-malate + NAD(+) = pyruvate + CO2 + NADH. This chain is NAD-dependent malic enzyme 59 kDa isoform, mitochondrial, found in Solanum tuberosum (Potato).